Consider the following 375-residue polypeptide: All-trans-retinol dehydrogenase [NAD(+)] ADH1B (375 aa).

The residue at position 2 (serine 2) is an N-acetylserine. Phosphoserine is present on serine 23. Tyrosine 35 carries the phosphotyrosine modification. Zn(2+) is bound by residues cysteine 47, histidine 68, cysteine 98, cysteine 101, cysteine 104, cysteine 112, and cysteine 175. Residues 200 to 205, aspartate 224, lysine 229, 293 to 295, and arginine 370 contribute to the NAD(+) site; these read GLGGVG and VGV.

It belongs to the zinc-containing alcohol dehydrogenase family. As to quaternary structure, homodimer or heterodimer of closely related subunits. Zn(2+) serves as cofactor. Expressed in liver.

The protein resides in the cytoplasm. The catalysed reaction is all-trans-retinol + NAD(+) = all-trans-retinal + NADH + H(+). It carries out the reaction all-trans-4-hydroxyretinol + NAD(+) = all-trans-4-hydroxyretinal + NADH + H(+). It catalyses the reaction all-trans-4-oxoretinol + NAD(+) = all-trans-4-oxoretinal + NADH + H(+). In terms of biological role, catalyzes the NAD-dependent oxidation of all-trans-retinol and its derivatives such as all-trans-4-hydroxyretinol and may participate in retinoid metabolism. In vitro can also catalyze the NADH-dependent reduction of all-trans-retinal and its derivatives such as all-trans-4-oxoretinal. Catalyzes in the oxidative direction with higher efficiency. Has the same affinity for all-trans-4-hydroxyretinol and all-trans-4-oxoretinal. This chain is All-trans-retinol dehydrogenase [NAD(+)] ADH1B, found in Papio hamadryas (Hamadryas baboon).